Consider the following 196-residue polypeptide: Shikimate kinase (196 aa).

21–26 serves as a coordination point for ATP; the sequence is GTGKSR. Ser25 lines the Mg(2+) pocket. Asp43, Arg67, and Gly89 together coordinate substrate. Arg126 lines the ATP pocket. Arg145 contacts substrate. Arg161 contacts ATP.

Belongs to the shikimate kinase family. In terms of assembly, monomer. The cofactor is Mg(2+).

Its subcellular location is the cytoplasm. It carries out the reaction shikimate + ATP = 3-phosphoshikimate + ADP + H(+). It participates in metabolic intermediate biosynthesis; chorismate biosynthesis; chorismate from D-erythrose 4-phosphate and phosphoenolpyruvate: step 5/7. In terms of biological role, catalyzes the specific phosphorylation of the 3-hydroxyl group of shikimic acid using ATP as a cosubstrate. The sequence is that of Shikimate kinase from Deinococcus radiodurans (strain ATCC 13939 / DSM 20539 / JCM 16871 / CCUG 27074 / LMG 4051 / NBRC 15346 / NCIMB 9279 / VKM B-1422 / R1).